Reading from the N-terminus, the 165-residue chain is Phosphopantetheine adenylyltransferase (165 aa).

Substrate is bound at residue Ser-10. ATP contacts are provided by residues Ser-10–Phe-11 and His-18. The substrate site is built by Lys-42, Thr-79, and Arg-93. Residues Gly-94–Arg-96, Glu-104, and Val-129–Thr-135 contribute to the ATP site.

Belongs to the bacterial CoaD family. Homohexamer. The cofactor is Mg(2+).

The protein localises to the cytoplasm. It carries out the reaction (R)-4'-phosphopantetheine + ATP + H(+) = 3'-dephospho-CoA + diphosphate. It functions in the pathway cofactor biosynthesis; coenzyme A biosynthesis; CoA from (R)-pantothenate: step 4/5. In terms of biological role, reversibly transfers an adenylyl group from ATP to 4'-phosphopantetheine, yielding dephospho-CoA (dPCoA) and pyrophosphate. This Rhodopseudomonas palustris (strain BisB5) protein is Phosphopantetheine adenylyltransferase.